Here is a 268-residue protein sequence, read N- to C-terminus: Tryptophan synthase alpha chain (268 aa).

Active-site proton acceptor residues include Glu-49 and Asp-60.

This sequence belongs to the TrpA family. In terms of assembly, tetramer of two alpha and two beta chains.

The enzyme catalyses (1S,2R)-1-C-(indol-3-yl)glycerol 3-phosphate + L-serine = D-glyceraldehyde 3-phosphate + L-tryptophan + H2O. The protein operates within amino-acid biosynthesis; L-tryptophan biosynthesis; L-tryptophan from chorismate: step 5/5. Functionally, the alpha subunit is responsible for the aldol cleavage of indoleglycerol phosphate to indole and glyceraldehyde 3-phosphate. This chain is Tryptophan synthase alpha chain, found in Vibrio metschnikovii.